A 229-amino-acid chain; its full sequence is Enolase-phosphatase E1 (229 aa).

Polar residues predominate over residues 208 to 218 (DTQSTHRQVSS). Residues 208 to 229 (DTQSTHRQVSSFDDIHPEQIPT) form a disordered region. Residues 220–229 (DDIHPEQIPT) are compositionally biased toward basic and acidic residues.

Belongs to the HAD-like hydrolase superfamily. MasA/MtnC family. As to quaternary structure, monomer. Mg(2+) is required as a cofactor.

The catalysed reaction is 5-methylsulfanyl-2,3-dioxopentyl phosphate + H2O = 1,2-dihydroxy-5-(methylsulfanyl)pent-1-en-3-one + phosphate. It functions in the pathway amino-acid biosynthesis; L-methionine biosynthesis via salvage pathway; L-methionine from S-methyl-5-thio-alpha-D-ribose 1-phosphate: step 3/6. It participates in amino-acid biosynthesis; L-methionine biosynthesis via salvage pathway; L-methionine from S-methyl-5-thio-alpha-D-ribose 1-phosphate: step 4/6. Functionally, bifunctional enzyme that catalyzes the enolization of 2,3-diketo-5-methylthiopentyl-1-phosphate (DK-MTP-1-P) into the intermediate 2-hydroxy-3-keto-5-methylthiopentenyl-1-phosphate (HK-MTPenyl-1-P), which is then dephosphorylated to form the acireductone 1,2-dihydroxy-3-keto-5-methylthiopentene (DHK-MTPene). The chain is Enolase-phosphatase E1 from Cronobacter sakazakii (strain ATCC BAA-894) (Enterobacter sakazakii).